We begin with the raw amino-acid sequence, 72 residues long: Translation initiation factor IF-1 (72 aa).

Residues 1-72 (MAKEELLEFP…TKGRITYRFK (72 aa)) form the S1-like domain.

The protein belongs to the IF-1 family. As to quaternary structure, component of the 30S ribosomal translation pre-initiation complex which assembles on the 30S ribosome in the order IF-2 and IF-3, IF-1 and N-formylmethionyl-tRNA(fMet); mRNA recruitment can occur at any time during PIC assembly.

Its subcellular location is the cytoplasm. One of the essential components for the initiation of protein synthesis. Stabilizes the binding of IF-2 and IF-3 on the 30S subunit to which N-formylmethionyl-tRNA(fMet) subsequently binds. Helps modulate mRNA selection, yielding the 30S pre-initiation complex (PIC). Upon addition of the 50S ribosomal subunit IF-1, IF-2 and IF-3 are released leaving the mature 70S translation initiation complex. This chain is Translation initiation factor IF-1, found in Maricaulis maris (strain MCS10) (Caulobacter maris).